The chain runs to 293 residues: Acetyl-coenzyme A carboxylase carboxyl transferase subunit beta (293 aa).

A CoA carboxyltransferase N-terminal domain is found at 29 to 293; sequence LWVKCSECSQ…GVKELAEANT (265 aa). Positions 33, 36, 52, and 55 each coordinate Zn(2+). The segment at 33-55 adopts a C4-type zinc-finger fold; it reads CSECSQVAYRKDLISNFNVCNNC.

The protein belongs to the AccD/PCCB family. Acetyl-CoA carboxylase is a heterohexamer composed of biotin carboxyl carrier protein (AccB), biotin carboxylase (AccC) and two subunits each of ACCase subunit alpha (AccA) and ACCase subunit beta (AccD). The cofactor is Zn(2+).

The protein resides in the cytoplasm. It catalyses the reaction N(6)-carboxybiotinyl-L-lysyl-[protein] + acetyl-CoA = N(6)-biotinyl-L-lysyl-[protein] + malonyl-CoA. It participates in lipid metabolism; malonyl-CoA biosynthesis; malonyl-CoA from acetyl-CoA: step 1/1. Component of the acetyl coenzyme A carboxylase (ACC) complex. Biotin carboxylase (BC) catalyzes the carboxylation of biotin on its carrier protein (BCCP) and then the CO(2) group is transferred by the transcarboxylase to acetyl-CoA to form malonyl-CoA. This Prochlorococcus marinus (strain AS9601) protein is Acetyl-coenzyme A carboxylase carboxyl transferase subunit beta.